Here is a 213-residue protein sequence, read N- to C-terminus: Pyrrolidone-carboxylate peptidase (213 aa).

Active-site residues include glutamate 78, cysteine 141, and histidine 165.

The protein belongs to the peptidase C15 family. Homotetramer.

Its subcellular location is the cytoplasm. It catalyses the reaction Release of an N-terminal pyroglutamyl group from a polypeptide, the second amino acid generally not being Pro.. In terms of biological role, removes 5-oxoproline from various penultimate amino acid residues except L-proline. The protein is Pyrrolidone-carboxylate peptidase of Clostridium perfringens (strain 13 / Type A).